A 355-amino-acid polypeptide reads, in one-letter code: Ferrochelatase (355 aa).

Fe cation-binding residues include His-214 and Glu-295.

Belongs to the ferrochelatase family.

The protein localises to the cytoplasm. It catalyses the reaction heme b + 2 H(+) = protoporphyrin IX + Fe(2+). The protein operates within porphyrin-containing compound metabolism; protoheme biosynthesis; protoheme from protoporphyrin-IX: step 1/1. Its function is as follows. Catalyzes the ferrous insertion into protoporphyrin IX. The protein is Ferrochelatase of Burkholderia thailandensis (strain ATCC 700388 / DSM 13276 / CCUG 48851 / CIP 106301 / E264).